A 63-amino-acid polypeptide reads, in one-letter code: Cysteine-rich venom protein 3 (63 aa).

Positions 1-25 are cleaved as a signal peptide; sequence MRKPITLILVVALALVLLATSEVSA. Intrachain disulfides connect C29–C43, C36–C48, and C42–C58.

In terms of tissue distribution, expressed by the venom gland.

The protein resides in the secreted. This Pimpla hypochondriaca (Parasitoid wasp) protein is Cysteine-rich venom protein 3.